We begin with the raw amino-acid sequence, 1638 residues long: DNA polymerase III PolC-type (1638 aa).

Positions 193 to 212 are disordered; that stretch reads SEIKKQRSEERESKNTREAK. The segment covering 194–212 has biased composition (basic and acidic residues); sequence EIKKQRSEERESKNTREAK. One can recognise an Exonuclease domain in the interval 596–752; the sequence is YVVFDVETTG…FDAEATGRLL (157 aa).

Belongs to the DNA polymerase type-C family. PolC subfamily.

Its subcellular location is the cytoplasm. It catalyses the reaction DNA(n) + a 2'-deoxyribonucleoside 5'-triphosphate = DNA(n+1) + diphosphate. In terms of biological role, required for replicative DNA synthesis. This DNA polymerase also exhibits 3' to 5' exonuclease activity. This chain is DNA polymerase III PolC-type, found in Lactococcus lactis subsp. lactis (strain IL1403) (Streptococcus lactis).